The sequence spans 217 residues: Ras-related protein Rab-39A (217 aa).

GTP is bound by residues S17, G20, K21, S22, C23, and T44. Residue S22 participates in Mg(2+) binding. A switch-I region spans residues P39–V47. Residues T44 and D68 each contribute to the Mg(2+) site. Residues G71, H127, K128, D130, A158, and K159 each coordinate GTP. The tract at residues G71 to V87 is switch-II. Residues C215 and C217 are each lipidated (S-geranylgeranyl cysteine). The residue at position 217 (C217) is a Cysteine methyl ester.

This sequence belongs to the small GTPase superfamily. Rab family. In terms of assembly, interacts (GDP-bound) with C9orf72; C9orf72 acts as a GEF for RAB39A. Interacts (GTP-bound) with HOPS complex components VPS39 and VPS41, and STX17; interaction between HOPS components and RAB39A contributes to obtaining a functional HOPS complex that promotes membrane fusion driven by STX17-SNAP29-VAMP8. Interacts with BECN1. Probably associates with the PI3K (PI3KC3/PI3K-III/class III phosphatidylinositol 3-kinase) complex. Interacts with UACA. Interacts with isoform a of RASSF1. Does not interact with isoform c of RASSF1. It depends on Mg(2+) as a cofactor. Post-translationally, prenylated. Prenylation is required for association with cellular membranes.

It localises to the cell membrane. The protein localises to the cytoplasmic vesicle. Its subcellular location is the phagosome membrane. The protein resides in the late endosome membrane. It is found in the lysosome membrane. It localises to the autolysosome membrane. The enzyme catalyses GTP + H2O = GDP + phosphate + H(+). With respect to regulation, regulated by guanine nucleotide exchange factors (GEFs) including c9Orf72, which promote the exchange of bound GDP for free GTP. Regulated by GTPase activating proteins (GAPs) which increase the GTP hydrolysis activity. Inhibited by GDP dissociation inhibitors (GDIs). The small GTPases Rab are key regulators of intracellular membrane trafficking, from the formation of transport vesicles to their fusion with membranes. Rabs cycle between an inactive GDP-bound form and an active GTP-bound form that is able to recruit to membranes different sets of downstream effectors directly responsible for vesicle formation, movement, tethering and fusion. RAB39A regulates autophagosome-lysosome fusion via recruitment of the HOPS endosomal tethering complex onto lysosomes; this process involves lysosomal RAB39A and autophagosomal RAB2A recruitment of HOPS subcomplexes VPS41-VPS16-VPS18-VPS33A and VPS39-VPS11, respectively, which assemble into a functional complex to mediate membrane tethering and SNAREs-driven membrane fusion. Also negatively regulates lipopolysaccharide (LPS)-induced autophagosome formation in macrophages, possibly by implicating PI3K. Promotes the delivery of MHC-I molecules from the ER to phagosomes and the generation of peptide-loaded MHC-I complexes in phagosomes, thus enhancing antigen cross-presentation by dendritic cells. Plays a role in the maturation and acidification of phagosomes that engulf pathogens, such as S.aureus and M.tuberculosis. Plays a role in the fusion of phagosomes with lysosomes. May be involved in multiple neurite formation. The polypeptide is Ras-related protein Rab-39A (Mus musculus (Mouse)).